The chain runs to 286 residues: Diaminopimelate epimerase (286 aa).

The substrate site is built by N12 and N67. Catalysis depends on C76, which acts as the Proton donor. Substrate is bound by residues 77-78, N165, N198, and 216-217; these read GN and ER. C225 serves as the catalytic Proton acceptor. 226–227 serves as a coordination point for substrate; it reads GT.

This sequence belongs to the diaminopimelate epimerase family. Homodimer.

Its subcellular location is the cytoplasm. The enzyme catalyses (2S,6S)-2,6-diaminopimelate = meso-2,6-diaminopimelate. The protein operates within amino-acid biosynthesis; L-lysine biosynthesis via DAP pathway; DL-2,6-diaminopimelate from LL-2,6-diaminopimelate: step 1/1. Catalyzes the stereoinversion of LL-2,6-diaminopimelate (L,L-DAP) to meso-diaminopimelate (meso-DAP), a precursor of L-lysine. This is Diaminopimelate epimerase from Methanothermobacter thermautotrophicus (strain ATCC 29096 / DSM 1053 / JCM 10044 / NBRC 100330 / Delta H) (Methanobacterium thermoautotrophicum).